Here is a 396-residue protein sequence, read N- to C-terminus: Elongation factor Tu (396 aa).

Positions 10-206 (KPHCNIGTIG…AVDSYIPQPE (197 aa)) constitute a tr-type G domain. The G1 stretch occupies residues 19-26 (GHVDHGKT). GTP is bound at residue 19–26 (GHVDHGKT). A Mg(2+)-binding site is contributed by T26. Residues 60–64 (GITIS) are G2. The segment at 81 to 84 (DCPG) is G3. GTP contacts are provided by residues 81–85 (DCPGH) and 136–139 (NKCD). The segment at 136 to 139 (NKCD) is G4. A G5 region spans residues 174-176 (SAL).

This sequence belongs to the TRAFAC class translation factor GTPase superfamily. Classic translation factor GTPase family. EF-Tu/EF-1A subfamily. As to quaternary structure, monomer.

It localises to the cytoplasm. The catalysed reaction is GTP + H2O = GDP + phosphate + H(+). In terms of biological role, GTP hydrolase that promotes the GTP-dependent binding of aminoacyl-tRNA to the A-site of ribosomes during protein biosynthesis. This chain is Elongation factor Tu, found in Rhodopseudomonas palustris (strain BisA53).